Here is a 1100-residue protein sequence, read N- to C-terminus: Guanylate cyclase 2G (1100 aa).

The first 43 residues, 1–43 (MASRARSEPPLEHRFYGGAESHAGHSSLVLTLFVVMLMTCLEA), serve as a signal peptide directing secretion. Residues 44–481 (AKLTVGFHAP…GAGMTASVTA (438 aa)) are Extracellular-facing. Asn55, Asn85, Asn94, Asn418, and Asn443 each carry an N-linked (GlcNAc...) asparagine glycan. The chain crosses the membrane as a helical span at residues 482–502 (VIPTVTLLVVASAAAITGLML). Residues 503–1100 (WRLRGKVQNH…EEEAKVPEIL (598 aa)) lie on the Cytoplasmic side of the membrane. One can recognise a Protein kinase domain in the interval 549–826 (STVKISADCG…PAFPSIKKTL (278 aa)). The Guanylate cyclase domain maps to 901 to 1031 (TIFFSDIVGF…DTVNMASRME (131 aa)).

Belongs to the adenylyl cyclase class-4/guanylyl cyclase family. Homooligomer. May interact with NPR1/GC-A. N-glycosylated. Expressed in lung, kidney and skeletal muscle. Low levels in intestine.

Its subcellular location is the cell membrane. The protein resides in the cytoplasm. It catalyses the reaction GTP = 3',5'-cyclic GMP + diphosphate. The sequence is that of Guanylate cyclase 2G (Gucy2g) from Rattus norvegicus (Rat).